Consider the following 361-residue polypeptide: Phenylalanine--tRNA ligase alpha subunit (361 aa).

Glu260 is a binding site for Mg(2+).

This sequence belongs to the class-II aminoacyl-tRNA synthetase family. Phe-tRNA synthetase alpha subunit type 1 subfamily. As to quaternary structure, tetramer of two alpha and two beta subunits. The cofactor is Mg(2+).

The protein localises to the cytoplasm. It catalyses the reaction tRNA(Phe) + L-phenylalanine + ATP = L-phenylalanyl-tRNA(Phe) + AMP + diphosphate + H(+). In Allorhizobium ampelinum (strain ATCC BAA-846 / DSM 112012 / S4) (Agrobacterium vitis (strain S4)), this protein is Phenylalanine--tRNA ligase alpha subunit.